Consider the following 304-residue polypeptide: Ribosomal protein L11 methyltransferase (304 aa).

S-adenosyl-L-methionine is bound by residues T155, G176, D198, and N239.

This sequence belongs to the methyltransferase superfamily. PrmA family.

Its subcellular location is the cytoplasm. The catalysed reaction is L-lysyl-[protein] + 3 S-adenosyl-L-methionine = N(6),N(6),N(6)-trimethyl-L-lysyl-[protein] + 3 S-adenosyl-L-homocysteine + 3 H(+). Its function is as follows. Methylates ribosomal protein L11. This is Ribosomal protein L11 methyltransferase from Caldicellulosiruptor bescii (strain ATCC BAA-1888 / DSM 6725 / KCTC 15123 / Z-1320) (Anaerocellum thermophilum).